The sequence spans 411 residues: Argininosuccinate synthase (411 aa).

ATP is bound by residues 11–19 (AYSGGLDTS) and A37. Residues Y88 and S93 each coordinate L-citrulline. 116–124 (SHGATGKGN) contacts ATP. L-aspartate is bound by residues T120, N124, and D125. N124 serves as a coordination point for L-citrulline. L-citrulline is bound by residues R128, S181, S190, E271, and Y283.

This sequence belongs to the argininosuccinate synthase family. In terms of assembly, homotetramer.

Its subcellular location is the cytoplasm. The protein resides in the cytosol. The catalysed reaction is L-citrulline + L-aspartate + ATP = 2-(N(omega)-L-arginino)succinate + AMP + diphosphate + H(+). It participates in amino-acid biosynthesis; L-arginine biosynthesis; L-arginine from L-ornithine and carbamoyl phosphate: step 2/3. It functions in the pathway nitrogen metabolism; urea cycle; (N(omega)-L-arginino)succinate from L-aspartate and L-citrulline: step 1/1. In terms of biological role, one of the enzymes of the urea cycle, the metabolic pathway transforming neurotoxic amonia produced by protein catabolism into inocuous urea in the liver of ureotelic animals. Catalyzes the formation of arginosuccinate from aspartate, citrulline and ATP and together with ASL it is responsible for the biosynthesis of arginine in most body tissues. The protein is Argininosuccinate synthase of Xenopus laevis (African clawed frog).